A 287-amino-acid polypeptide reads, in one-letter code: Nucleotide-binding protein Gbem_0872 (287 aa).

8 to 15 (GLSGSGKS) is a binding site for ATP. 59 to 62 (DIRS) contacts GTP.

It belongs to the RapZ-like family.

Functionally, displays ATPase and GTPase activities. This is Nucleotide-binding protein Gbem_0872 from Citrifermentans bemidjiense (strain ATCC BAA-1014 / DSM 16622 / JCM 12645 / Bem) (Geobacter bemidjiensis).